Reading from the N-terminus, the 326-residue chain is Heat-inducible transcription repressor HrcA (326 aa).

This sequence belongs to the HrcA family.

Its function is as follows. Negative regulator of class I heat shock genes (grpE-dnaK-dnaJ and groELS operons). Prevents heat-shock induction of these operons. The chain is Heat-inducible transcription repressor HrcA from Staphylococcus saprophyticus subsp. saprophyticus (strain ATCC 15305 / DSM 20229 / NCIMB 8711 / NCTC 7292 / S-41).